Reading from the N-terminus, the 625-residue chain is tRNA uridine 5-carboxymethylaminomethyl modification enzyme MnmG (625 aa).

13-18 (GGGHAG) provides a ligand contact to FAD. An NAD(+)-binding site is contributed by 273 to 287 (GPRYCPSIEDKVVRF).

It belongs to the MnmG family. As to quaternary structure, homodimer. Heterotetramer of two MnmE and two MnmG subunits. FAD serves as cofactor.

It localises to the cytoplasm. Its function is as follows. NAD-binding protein involved in the addition of a carboxymethylaminomethyl (cmnm) group at the wobble position (U34) of certain tRNAs, forming tRNA-cmnm(5)s(2)U34. The polypeptide is tRNA uridine 5-carboxymethylaminomethyl modification enzyme MnmG (Methylococcus capsulatus (strain ATCC 33009 / NCIMB 11132 / Bath)).